The primary structure comprises 771 residues: UPF0313 protein PSPTO_4928 (771 aa).

The Radical SAM core domain occupies 371–649 (AYDMIRFSVN…KAFLRYHDPK (279 aa)). [4Fe-4S] cluster contacts are provided by C385, C389, and C392. Positions 683–771 (DTYQSARRKN…KPARKPVVPR (89 aa)) are disordered. Basic and acidic residues-rich tracts occupy residues 726 to 735 (KPWDKREEAK) and 745 to 754 (AAKERMDAAK). Positions 756 to 765 (GKGKGGKPAR) are enriched in basic residues.

The protein belongs to the UPF0313 family. It depends on [4Fe-4S] cluster as a cofactor.

The protein is UPF0313 protein PSPTO_4928 of Pseudomonas syringae pv. tomato (strain ATCC BAA-871 / DC3000).